The chain runs to 309 residues: Probable HTH-type transcriptional regulator LtrA (309 aa).

The region spanning 1–61 is the HTH lysR-type domain; sequence MNLNLLPDLA…QRTTRKLRLS (61 aa). A DNA-binding region (H-T-H motif) is located at residues 21–40; sequence FSAVARQNGITPSAVSRSVS.

The protein belongs to the LysR transcriptional regulatory family.

The chain is Probable HTH-type transcriptional regulator LtrA (ltrA) from Klebsiella pneumoniae.